Consider the following 329-residue polypeptide: Olfactory receptor 10J3 (329 aa).

Residues 1–26 (MPKLNSTFVTEFLFEGFSSFRRQHKL) lie on the Extracellular side of the membrane. N-linked (GlcNAc...) asparagine glycosylation occurs at N5. Residues 27 to 47 (VFFVVFLTLYLLTLSGNVIIM) form a helical membrane-spanning segment. The Cytoplasmic segment spans residues 48 to 55 (TIIRLDHH). Residues 56–76 (LHTPMYFFLCMLSISETCYTV) form a helical membrane-spanning segment. Over 77 to 100 (AIIPHMLSGLLNPHQPIATQSCAT) the chain is Extracellular. C98 and C190 are joined by a disulfide. A helical membrane pass occupies residues 101-121 (QLFFYLTFGINNCFLLTVMGY). The Cytoplasmic segment spans residues 122–140 (DRYVAICNPLRYSVIMGKR). A helical transmembrane segment spans residues 141–161 (ACIQLASGSLGIGLGMAIVQV). At 162-198 (TSVFGLPFCDAFVISHFFCDVRHLLKLACTDTTVNEI) the chain is on the extracellular side. Residues 199–218 (INFVVSVCVLVLPMGLVFIS) form a helical membrane-spanning segment. Over 219 to 238 (YVLIISTILKIASAEGQKKA) the chain is Cytoplasmic. The helical transmembrane segment at 239–259 (FATCASHLTVVIIHYGCASII) threads the bilayer. Residues 260–272 (YLKPKSQSSLGQD) lie on the Extracellular side of the membrane. A helical transmembrane segment spans residues 273 to 293 (RLISVTYTHHSPTEPCCVQPE). At 294–329 (EQGGQRCSAQSRGAKNSVSLMKRGCEGFSFAFINMY) the chain is on the cytoplasmic side.

The protein belongs to the G-protein coupled receptor 1 family.

It localises to the cell membrane. Functionally, odorant receptor. The chain is Olfactory receptor 10J3 (OR10J3) from Homo sapiens (Human).